We begin with the raw amino-acid sequence, 91 residues long: Putative transmembrane protein ORF91a (91 aa).

The next 3 membrane-spanning stretches (helical) occupy residues 17–37 (TGISFDSITGAIIAGVVVGLA), 40–60 (AFLGKFPDYVEVLIGVGLLFM), and 69–89 (GIGFVLTADGIYGLIKNYIST).

The protein localises to the host membrane. This chain is Putative transmembrane protein ORF91a, found in Acidianus convivator (ABV).